Here is a 438-residue protein sequence, read N- to C-terminus: tRNA modification GTPase MnmE (438 aa).

(6S)-5-formyl-5,6,7,8-tetrahydrofolate contacts are provided by Arg-20, Glu-76, and Lys-115. One can recognise a TrmE-type G domain in the interval 210-370 (NFTIMILGRR…LKCFINKIVD (161 aa)). Asn-220 is a binding site for K(+). Residues 220 to 225 (NVGKST), 239 to 245 (TNIPGTT), and 264 to 267 (DTAG) each bind GTP. Ser-224 serves as a coordination point for Mg(2+). Thr-239, Ile-241, and Thr-244 together coordinate K(+). Thr-245 contributes to the Mg(2+) binding site. Lys-438 contributes to the (6S)-5-formyl-5,6,7,8-tetrahydrofolate binding site.

It belongs to the TRAFAC class TrmE-Era-EngA-EngB-Septin-like GTPase superfamily. TrmE GTPase family. As to quaternary structure, homodimer. Heterotetramer of two MnmE and two MnmG subunits. K(+) serves as cofactor.

The protein resides in the cytoplasm. Functionally, exhibits a very high intrinsic GTPase hydrolysis rate. Involved in the addition of a carboxymethylaminomethyl (cmnm) group at the wobble position (U34) of certain tRNAs, forming tRNA-cmnm(5)s(2)U34. The sequence is that of tRNA modification GTPase MnmE from Carsonella ruddii (strain PV).